Consider the following 110-residue polypeptide: UPF0122 protein STER_0914 (110 aa).

This sequence belongs to the UPF0122 family.

Might take part in the signal recognition particle (SRP) pathway. This is inferred from the conservation of its genetic proximity to ftsY/ffh. May be a regulatory protein. This chain is UPF0122 protein STER_0914, found in Streptococcus thermophilus (strain ATCC BAA-491 / LMD-9).